Reading from the N-terminus, the 122-residue chain is Urease subunit beta (122 aa).

A disordered region spans residues Gly92–Glu122.

Belongs to the urease beta subunit family. Heterotrimer of UreA (gamma), UreB (beta) and UreC (alpha) subunits. Three heterotrimers associate to form the active enzyme.

The protein resides in the cytoplasm. It catalyses the reaction urea + 2 H2O + H(+) = hydrogencarbonate + 2 NH4(+). Its pathway is nitrogen metabolism; urea degradation; CO(2) and NH(3) from urea (urease route): step 1/1. In Saccharopolyspora erythraea (strain ATCC 11635 / DSM 40517 / JCM 4748 / NBRC 13426 / NCIMB 8594 / NRRL 2338), this protein is Urease subunit beta.